A 173-amino-acid chain; its full sequence is MAEKRNIFLIGPMGAGKSTIGRQLSQQLNMEFFDSDQEIEKRTGANISWVFDVEGEHGFRQREVKVIDELTKKQGIVLATGGGSVKFKENRNILSARGIVIYLETTIEKQLSRTKRDKKRPLLQSNISNRTVLENLAYERNPLYEEIADFKIQTDNQSAKSVAYSIIHLLEKM.

Residue 14-19 (GAGKST) participates in ATP binding. A Mg(2+)-binding site is contributed by Ser18. Residues Asp36, Arg60, and Gly82 each coordinate substrate. Arg120 contributes to the ATP binding site. Arg140 lines the substrate pocket. Residue Gln157 participates in ATP binding.

The protein belongs to the shikimate kinase family. As to quaternary structure, monomer. It depends on Mg(2+) as a cofactor.

The protein resides in the cytoplasm. The enzyme catalyses shikimate + ATP = 3-phosphoshikimate + ADP + H(+). It functions in the pathway metabolic intermediate biosynthesis; chorismate biosynthesis; chorismate from D-erythrose 4-phosphate and phosphoenolpyruvate: step 5/7. Catalyzes the specific phosphorylation of the 3-hydroxyl group of shikimic acid using ATP as a cosubstrate. This is Shikimate kinase from Buchnera aphidicola subsp. Schizaphis graminum (strain Sg).